A 1040-amino-acid chain; its full sequence is Multidrug resistance protein MdtB (1040 aa).

12 consecutive transmembrane segments (helical) span residues Phe-16–Ile-36, Leu-347–Ala-367, Ile-369–Leu-389, Leu-396–Ile-416, Ile-440–Phe-460, Phe-472–Pro-492, Trp-537–Ile-557, Leu-863–Ile-883, Phe-888–Ala-908, Ile-911–Val-931, Ile-968–Val-988, and Ile-998–Ile-1018.

The protein belongs to the resistance-nodulation-cell division (RND) (TC 2.A.6) family. MdtB subfamily. In terms of assembly, part of a tripartite efflux system composed of MdtA, MdtB and MdtC. MdtB forms a heteromultimer with MdtC.

Its subcellular location is the cell inner membrane. Its function is as follows. The MdtABC tripartite complex confers resistance against novobiocin and deoxycholate. The sequence is that of Multidrug resistance protein MdtB from Escherichia coli O139:H28 (strain E24377A / ETEC).